Reading from the N-terminus, the 999-residue chain is Sarcoplasmic/endoplasmic reticulum calcium ATPase 3 (999 aa).

Position 1 is an N-acetylmethionine (M1). Residues 1-48 (MEEAHLLSAADVLRRFSVTAEGGLTLEQVTDARERYGPNELPTEEGKS) are Cytoplasmic-facing. S17 bears the Phosphoserine mark. T19 bears the Phosphothreonine mark. Residues 49 to 69 (LWELVVEQFEDLLVRILLLAA) form a helical membrane-spanning segment. Topologically, residues 70–89 (LVSFVLAWFEEGEETTTAFV) are lumenal. Residues 90 to 110 (EPLVIMLILVANAIVGVWQER) form a helical membrane-spanning segment. Residues 111 to 253 (NAESAIEALK…PERTPLQRKL (143 aa)) are Cytoplasmic-facing. The helical transmembrane segment at 254–273 (DEFGRQLSHAISVICVAVWV) threads the bilayer. Topologically, residues 274-295 (INIGHFADPAHGGSWLRGAVYY) are lumenal. The helical transmembrane segment at 296–313 (FKIAVALAVAAIPEGLPA) threads the bilayer. Residues V304, A305, I307, and E309 each contribute to the Ca(2+) site. The Cytoplasmic segment spans residues 314–757 (VITTCLALGT…EEGRAIYNNM (444 aa)). The active-site 4-aspartylphosphate intermediate is D351. Residues D351 and T353 each contribute to the Mg(2+) site. ATP is bound at residue T353. Residues 370 to 400 (AEAEAGACRLHEFTISGTTYTPEGEVRQGEQ) are interaction with phospholamban 1. T415 is modified (phosphothreonine). E442, R489, K515, R560, T625, G626, and D627 together coordinate ATP. S662 is modified (phosphoserine). ATP-binding residues include R678 and K684. Position 703 (D703) interacts with Mg(2+). Residue N706 participates in ATP binding. The helical transmembrane segment at 758 to 777 (KQFIRYLISSNVGEVVCIFL) threads the bilayer. 2 residues coordinate Ca(2+): N768 and E771. The Lumenal segment spans residues 778 to 787 (TAILGLPEAL). A helical membrane pass occupies residues 788-808 (IPVQLLWVNLVTDGLPATALG). Residues 788–808 (IPVQLLWVNLVTDGLPATALG) form an interaction with phospholamban 2 region. The Ca(2+) site is built by N796, T799, and D800. The Cytoplasmic segment spans residues 809-828 (FNPPDLDIMEKLPRNPREAL). A helical membrane pass occupies residues 829–851 (ISGWLFFRYLAIGVYVGLATVAA). Residues 852 to 897 (ATWWFLYDAEGPQVTFHQLRNFLKCSEDNPLFAGIDCEVFESRFPT) are Lumenal-facing. Residues 898–917 (TMALSVLVTIEMCNALNSVS) form a helical membrane-spanning segment. A Ca(2+)-binding site is contributed by E908. Topologically, residues 918–930 (ENQSLLRMPPWLN) are cytoplasmic. The chain crosses the membrane as a helical span at residues 931-949 (PWLLGAVVMSMALHFLILL). Residues 950 to 964 (VPPLPLIFQVTPLSG) are Lumenal-facing. The chain crosses the membrane as a helical span at residues 965-985 (RQWGVVLQMSLPVILLDEALK). Residues 986 to 999 (YLSRHHVDEKKDLK) are Cytoplasmic-facing.

The protein belongs to the cation transport ATPase (P-type) (TC 3.A.3) family. Type IIA subfamily. As to quaternary structure, interacts with sarcolipin (SLN). Interacts with phospholamban (PLN). Interacts with myoregulin (MRLN). Interacts with DWORF. Interacts with VMP1. Interacts with TUNAR; the interaction occurs at low levels in low glucose conditions and is increased by high glucose levels. The cofactor is Mg(2+). In terms of tissue distribution, found in most tissues. Most abundant in large and small intestine, spleen and lung. Also detected in PC12 cells.

It is found in the endoplasmic reticulum membrane. Its subcellular location is the sarcoplasmic reticulum membrane. The enzyme catalyses Ca(2+)(in) + ATP + H2O = Ca(2+)(out) + ADP + phosphate + H(+). Its activity is regulated as follows. Inhibited by sarcolipin (SLN), phospholamban (PLN) and myoregulin (MRLN). Enhanced by DWORF; DWORF increases activity by displacing sarcolipin (SLN), phospholamban (PLN) and myoregulin (MRLN). In terms of biological role, this magnesium-dependent enzyme catalyzes the hydrolysis of ATP coupled with the transport of the calcium. Transports calcium ions from the cytosol into the sarcoplasmic/endoplasmic reticulum lumen. Contributes to calcium sequestration involved in muscular excitation/contraction. Functionally, this magnesium-dependent enzyme catalyzes the hydrolysis of ATP coupled with the transport of calcium. Transports calcium ions from the cytosol into the sarcoplasmic/endoplasmic reticulum lumen. Contributes to calcium sequestration involved in muscular excitation/contraction. This chain is Sarcoplasmic/endoplasmic reticulum calcium ATPase 3 (Atp2a3), found in Rattus norvegicus (Rat).